A 678-amino-acid polypeptide reads, in one-letter code: RNA helicase NPH-II (678 aa).

One can recognise a Helicase ATP-binding domain in the interval 175–351 (FTSWARRVPV…EFFAESVFVH (177 aa)). 188–195 (GDTGVGKT) is a binding site for ATP. Residues 300–303 (DEVH) carry the DEXH box motif. Residues 371 to 546 (PLNRFMYIEE…VFDLQLPEDL (176 aa)) form the Helicase C-terminal domain.

It belongs to the DEAD box helicase family. DEAH subfamily. As to quaternary structure, monomer.

Its subcellular location is the virion. The catalysed reaction is ATP + H2O = ADP + phosphate + H(+). Its function is as follows. NTP-dependent helicase that catalyzes unidirectional unwinding of 3'tailed duplex RNAs and plays an important role during transcription of early mRNAs, presumably by preventing R-loop formation behind the elongating RNA polymerase. Might also play a role in the export of newly synthesized mRNA chains out of the core into the cytoplasm. Required for replication and propagation of viral particles. In Oryctolagus cuniculus (Rabbit), this protein is RNA helicase NPH-II (OPG084).